Here is a 146-residue protein sequence, read N- to C-terminus: MTTSTIEQKDENEPLLATADQVSALIESFIELGVLVHDNQGTQQSHTALTHKTNQVISQLSGLTSSPFTHQFPIPVDVISYIEDGRNPDIYTREFIEVTAKSNARLKGKMKAFARLRDVLGEKLGNEFPRLVDSIDDIKKRTTPEE.

It belongs to the Mediator complex subunit 10 family. Component of the Mediator complex.

It localises to the nucleus. Component of the Mediator complex, a coactivator involved in the regulated transcription of nearly all RNA polymerase II-dependent genes. Mediator functions as a bridge to convey information from gene-specific regulatory proteins to the basal RNA polymerase II transcription machinery. Mediator is recruited to promoters by direct interactions with regulatory proteins and serves as a scaffold for the assembly of a functional preinitiation complex with RNA polymerase II and the general transcription factors. This chain is Mediator of RNA polymerase II transcription subunit 10 (NUT2), found in Scheffersomyces stipitis (strain ATCC 58785 / CBS 6054 / NBRC 10063 / NRRL Y-11545) (Yeast).